The primary structure comprises 458 residues: Carboxypeptidase N catalytic chain (458 aa).

Residues 1–20 (MSDLLSVFLHLLLLFKLVAP) form the signal peptide. In terms of domain architecture, Peptidase M14 spans 24 to 338 (RHHRYDDLVR…EALIQFLEQV (315 aa)). A disulfide bond links Cys42 and Cys104. Zn(2+)-binding residues include His86, Glu89, and His216. The cysteines at positions 271 and 311 are disulfide-linked. The Proton donor/acceptor role is filled by Glu308. Residues Thr400, Thr402, and Thr409 are each glycosylated (O-linked (GalNAc...) threonine). Positions 423 to 458 (SPVRRAPSRRHGVRAKVQPQARKKEMEMRQLQRGPA) are disordered.

This sequence belongs to the peptidase M14 family. Tetramer of two catalytic chains and two glycosylated inactive chains. Zn(2+) serves as cofactor. Synthesized in the liver and secreted in plasma.

The protein resides in the secreted. Its subcellular location is the extracellular space. It catalyses the reaction Release of a C-terminal basic amino acid, preferentially lysine.. In terms of biological role, protects the body from potent vasoactive and inflammatory peptides containing C-terminal Arg or Lys (such as kinins or anaphylatoxins) which are released into the circulation. The chain is Carboxypeptidase N catalytic chain (CPN1) from Homo sapiens (Human).